The sequence spans 259 residues: Small ribosomal subunit protein mS23 (259 aa).

Residues 230-244 are compositionally biased toward polar residues; sequence RAASFTGSALPSSEE. Residues 230–259 are disordered; that stretch reads RAASFTGSALPSSEESAPVDEETEKVPQQV.

This sequence belongs to the mitochondrion-specific ribosomal protein mS23 family. Component of the mitochondrial small ribosomal subunit.

The protein resides in the mitochondrion. This Aspergillus terreus (strain NIH 2624 / FGSC A1156) protein is Small ribosomal subunit protein mS23 (rsm25).